The following is a 332-amino-acid chain: Ribose-phosphate pyrophosphokinase (332 aa).

57-59 (DGE) serves as a coordination point for ATP. Residues His-150 and Asp-189 each contribute to the Mg(2+) site. Residue Lys-213 is part of the active site. Residues Arg-215, Asp-239, and 243 to 247 (DTAGT) contribute to the D-ribose 5-phosphate site.

This sequence belongs to the ribose-phosphate pyrophosphokinase family. Class I subfamily. Homohexamer. It depends on Mg(2+) as a cofactor.

It localises to the cytoplasm. It catalyses the reaction D-ribose 5-phosphate + ATP = 5-phospho-alpha-D-ribose 1-diphosphate + AMP + H(+). The protein operates within metabolic intermediate biosynthesis; 5-phospho-alpha-D-ribose 1-diphosphate biosynthesis; 5-phospho-alpha-D-ribose 1-diphosphate from D-ribose 5-phosphate (route I): step 1/1. Functionally, involved in the biosynthesis of the central metabolite phospho-alpha-D-ribosyl-1-pyrophosphate (PRPP) via the transfer of pyrophosphoryl group from ATP to 1-hydroxyl of ribose-5-phosphate (Rib-5-P). This is Ribose-phosphate pyrophosphokinase from Gloeobacter violaceus (strain ATCC 29082 / PCC 7421).